A 482-amino-acid chain; its full sequence is Retinoic acid receptor beta (482 aa).

The tract at residues 1-114 (MSTSSHACPV…PLPPPRVYKP (114 aa)) is modulating. Position 104 is a phosphoserine (S104). 2 consecutive NR C4-type zinc fingers follow at residues 115 to 135 (CFVCQDKSSGYHYGVSACEGC) and 151 to 175 (CHRDKNCVINKVTRNRCQYCRLQKC). The segment at residues 115–180 (CFVCQDKSSG…RLQKCFEVGM (66 aa)) is a DNA-binding region (nuclear receptor). Positions 181–209 (SKESVRNDRNKKKKEPSKQECTESYEMTA) are hinge. The NR LBD domain occupies 210 to 444 (ELDDLTEKIR…PLIQEMLENS (235 aa)). Residues 443 to 482 (NSEGHEPLTPSSSGNIAEHSPSVSPSSVENSGVSQSPLLQ) are disordered. Residues 462-482 (SPSVSPSSVENSGVSQSPLLQ) show a composition bias toward low complexity.

It belongs to the nuclear hormone receptor family. NR1 subfamily. As to quaternary structure, homodimer. Heterodimer; with a RXR molecule. Binds DNA preferentially as a RAR/RXR heterodimer. Heterodimerizes (via NR LBD) with RXRA. Interacts weakly with NCOR2.

It localises to the nucleus. The protein resides in the cytoplasm. Receptor for retinoic acid. Retinoic acid receptors bind as heterodimers to their target response elements in response to their ligands, all-trans or 9-cis retinoic acid, and regulate gene expression in various biological processes. The RAR/RXR heterodimers bind to the retinoic acid response elements (RARE) composed of tandem 5'-AGGTCA-3' sites known as DR1-DR5. In the absence of ligand, acts mainly as an activator of gene expression due to weak binding to corepressors. The RXRA/RARB heterodimer can act as a repressor on the DR1 element and as an activator on the DR5 element. In concert with RARG, required for skeletal growth, matrix homeostasis and growth plate function. The polypeptide is Retinoic acid receptor beta (Rarb) (Mus musculus (Mouse)).